The following is a 55-amino-acid chain: Cop-6 protein (55 aa).

It belongs to the transcriptional regulatory CopG/NikR family.

In terms of biological role, acts in trans as a negative regulatory element in pE194 replication. This chain is Cop-6 protein, found in Staphylococcus aureus.